An 81-amino-acid chain; its full sequence is Acyl carrier protein (81 aa).

The Carrier domain maps to 4-79 (DEVYSRVRKI…DAVNYILSKK (76 aa)). Ser39 bears the O-(pantetheine 4'-phosphoryl)serine mark.

The protein belongs to the acyl carrier protein (ACP) family. 4'-phosphopantetheine is transferred from CoA to a specific serine of apo-ACP by AcpS. This modification is essential for activity because fatty acids are bound in thioester linkage to the sulfhydryl of the prosthetic group.

The protein localises to the cytoplasm. It participates in lipid metabolism; fatty acid biosynthesis. Functionally, carrier of the growing fatty acid chain in fatty acid biosynthesis. This Synechococcus sp. (strain JA-3-3Ab) (Cyanobacteria bacterium Yellowstone A-Prime) protein is Acyl carrier protein.